The following is a 1027-amino-acid chain: Abnormal embryogenesis protein 30 (1027 aa).

WD repeat units follow at residues 18–65 (RTPF…IQAV) and 70–109 (KLDS…VRFS). 2 disordered regions span residues 619-655 (NDSS…ACDL) and 1005-1027 (AMDS…DDDI). 2 stretches are compositionally biased toward acidic residues: residues 625–647 (LEED…EPEG) and 1014–1027 (DNGE…DDDI).

This sequence belongs to the APC4 family. In terms of assembly, the APC/C is probably composed of at least 12 subunits: apc-2, apc-10, apc-11, cdc-26, emb-1, emb-27, emb-30, mat-1, mat-2, mat-3, such-1 and gfi-3.

Its pathway is protein modification; protein ubiquitination. Probable component of the anaphase promoting complex/cyclosome (APC/C), a cell cycle-regulated E3 ubiquitin ligase that controls progression through mitosis and the G1 phase of the cell cycle. The APC/C complex acts by mediating ubiquitination and subsequent degradation of target proteins. Developmental role in early embryogenesis and the metaphase to anaphase transition in oocyte and spermatocyte meiosis and mitosis in somatic and germ cells. Required for embryonic anterior-posterior axis formation. Negatively regulates ify-1 protein levels during meiosis I. Plays a role in regulating the abundance of glr-1 receptors in postmitotic neurons, which may in turn control animal locomotion. Involved in regulating GABA neurotransmitter release at neuromuscular junctions in GABA motor neurons. This is Abnormal embryogenesis protein 30 from Caenorhabditis elegans.